The chain runs to 444 residues: Tol-Pal system protein TolB (444 aa).

A signal peptide spans 1-19 (MRNIIYFILSLLFSFKGYA).

This sequence belongs to the TolB family. The Tol-Pal system is composed of five core proteins: the inner membrane proteins TolA, TolQ and TolR, the periplasmic protein TolB and the outer membrane protein Pal. They form a network linking the inner and outer membranes and the peptidoglycan layer.

The protein localises to the periplasm. Functionally, part of the Tol-Pal system, which plays a role in outer membrane invagination during cell division and is important for maintaining outer membrane integrity. The protein is Tol-Pal system protein TolB of Rickettsia felis (strain ATCC VR-1525 / URRWXCal2) (Rickettsia azadi).